The chain runs to 186 residues: Adenine phosphoribosyltransferase (186 aa).

The protein belongs to the purine/pyrimidine phosphoribosyltransferase family. As to quaternary structure, homodimer.

Its subcellular location is the cytoplasm. It catalyses the reaction AMP + diphosphate = 5-phospho-alpha-D-ribose 1-diphosphate + adenine. It functions in the pathway purine metabolism; AMP biosynthesis via salvage pathway; AMP from adenine: step 1/1. Its function is as follows. Catalyzes a salvage reaction resulting in the formation of AMP, that is energically less costly than de novo synthesis. This is Adenine phosphoribosyltransferase from Xanthomonas oryzae pv. oryzae (strain MAFF 311018).